The chain runs to 276 residues: Large ribosomal subunit protein uL2 (276 aa).

The interval 219–276 (TVRGSAMNPNDHPHGGGEGRSPIGRPSPVTPWGKPALGYKTRKKNKHSDKFIVTGRKR) is disordered.

This sequence belongs to the universal ribosomal protein uL2 family. In terms of assembly, part of the 50S ribosomal subunit. Forms a bridge to the 30S subunit in the 70S ribosome.

In terms of biological role, one of the primary rRNA binding proteins. Required for association of the 30S and 50S subunits to form the 70S ribosome, for tRNA binding and peptide bond formation. It has been suggested to have peptidyltransferase activity; this is somewhat controversial. Makes several contacts with the 16S rRNA in the 70S ribosome. In Alkaliphilus metalliredigens (strain QYMF), this protein is Large ribosomal subunit protein uL2.